The following is a 66-amino-acid chain: DNA gyrase inhibitor YacG (66 aa).

Residues Cys-9, Cys-12, Cys-28, and Cys-32 each coordinate Zn(2+). A disordered region spans residues 45–66; sequence HKIAGSEGSEDELYSGDLEPRH.

The protein belongs to the DNA gyrase inhibitor YacG family. In terms of assembly, interacts with GyrB. The cofactor is Zn(2+).

Its function is as follows. Inhibits all the catalytic activities of DNA gyrase by preventing its interaction with DNA. Acts by binding directly to the C-terminal domain of GyrB, which probably disrupts DNA binding by the gyrase. The chain is DNA gyrase inhibitor YacG from Pseudomonas putida (strain ATCC 700007 / DSM 6899 / JCM 31910 / BCRC 17059 / LMG 24140 / F1).